The sequence spans 214 residues: Phosphatidylcholine transfer protein (214 aa).

Met-1 carries the post-translational modification N-acetylmethionine. One can recognise an START domain in the interval Met-1 to Lys-212. 2 residues coordinate a 1,2-diacyl-sn-glycero-3-phosphocholine: Tyr-72 and Arg-78. Ser-139 carries the phosphoserine modification. Residue Gln-157 participates in a 1,2-diacyl-sn-glycero-3-phosphocholine binding.

In terms of assembly, interacts with ACOT13/THEM2. In terms of tissue distribution, highest expression in liver, placenta, testis, kidney and heart. Low levels in brain and lung. No expression detected in thymus.

It localises to the cytoplasm. Catalyzes the transfer of phosphatidylcholine between membranes. Binds a single lipid molecule. This is Phosphatidylcholine transfer protein (PCTP) from Homo sapiens (Human).